The following is a 235-amino-acid chain: H2HPP isomerase (235 aa).

2 consecutive Cupin type-2 domains span residues 41 to 106 (VPPH…AIDI) and 151 to 216 (KIPG…KSIN). Histidine 50, histidine 52, glutamine 56, histidine 91, histidine 162, histidine 164, glutamine 168, and histidine 202 together coordinate a divalent metal cation. Tyrosine 223 is a binding site for substrate.

As to quaternary structure, monomer. Requires Fe(2+) as cofactor. Co(2+) serves as cofactor.

The protein localises to the cytoplasm. It catalyses the reaction 3-[(4R)-4-hydroxycyclohexa-1,5-dien-1-yl]-2-oxopropanoate = 3-[(1E,4R)-4-hydroxycyclohex-2-en-1-ylidene]pyruvate. It functions in the pathway antibiotic biosynthesis; bacilysin biosynthesis. Its function is as follows. Part of the bacABCDEF operon responsible for the biosynthesis of the nonribosomally synthesized dipeptide antibiotic bacilysin, composed of L-alanine and L-anticapsin. Bacilysin is an irreversible inactivator of the glutaminase domain of glucosamine synthetase. BacB catalyzes the allylic isomerization of the endocyclic-delta(4),delta(8)-7R-dihydro-hydroxyphenylpyruvate (en-H2HPP) to generate a mixture of 3E,7R- and 3Z, 7R-olefins (E/Z ration of 3/1) of the exocyclic-delta(3),delta(5)-dihydro-hydroxyphenylpyruvate (ex-H2HPP). This Bacillus subtilis (strain 168) protein is H2HPP isomerase.